Consider the following 130-residue polypeptide: Small ribosomal subunit protein uS11 (130 aa).

This sequence belongs to the universal ribosomal protein uS11 family. Part of the 30S ribosomal subunit. Interacts with proteins S7 and S18. Binds to IF-3.

In terms of biological role, located on the platform of the 30S subunit, it bridges several disparate RNA helices of the 16S rRNA. Forms part of the Shine-Dalgarno cleft in the 70S ribosome. The sequence is that of Small ribosomal subunit protein uS11 from Shewanella halifaxensis (strain HAW-EB4).